The sequence spans 463 residues: Argininosuccinate lyase (463 aa).

This sequence belongs to the lyase 1 family. Argininosuccinate lyase subfamily.

It localises to the cytoplasm. It carries out the reaction 2-(N(omega)-L-arginino)succinate = fumarate + L-arginine. Its pathway is amino-acid biosynthesis; L-arginine biosynthesis; L-arginine from L-ornithine and carbamoyl phosphate: step 3/3. In Chlorobaculum parvum (strain DSM 263 / NCIMB 8327) (Chlorobium vibrioforme subsp. thiosulfatophilum), this protein is Argininosuccinate lyase.